The primary structure comprises 871 residues: Leucine--tRNA ligase (871 aa).

The 'HIGH' region motif lies at 42–52 (PYPSGSLHMGH). The 'KMSKS' region signature appears at 634 to 638 (TMSKS). Lysine 637 is a binding site for ATP.

It belongs to the class-I aminoacyl-tRNA synthetase family.

It localises to the cytoplasm. The catalysed reaction is tRNA(Leu) + L-leucine + ATP = L-leucyl-tRNA(Leu) + AMP + diphosphate. The sequence is that of Leucine--tRNA ligase from Nostoc punctiforme (strain ATCC 29133 / PCC 73102).